Here is a 538-residue protein sequence, read N- to C-terminus: Natural resistance-associated macrophage protein 1 (538 aa).

The disordered stretch occupies residues 1-36; sequence MTGDTDPPKQSRTQYGSISSSPSPGPPQVPPGGTYL. Residues 1-54 are Cytoplasmic-facing; it reads MTGDTDPPKQSRTQYGSISSSPSPGPPQVPPGGTYLSEKIPIPNAEPGTFSLRK. A helical membrane pass occupies residues 55-75; that stretch reads LWAFTGPGFLMSIAYLDPGNI. The Extracellular segment spans residues 76-81; the sequence is QSDLQA. The helical transmembrane segment at 82–102 threads the bilayer; sequence GAVAGFKLLWVLLWATVLGLL. Residues 103–139 are Cytoplasmic-facing; it reads CQRLAARLGVVTGKDLGEICHLYYPKVPRTLLWLNME. The helical transmembrane segment at 140 to 160 threads the bilayer; it reads LAIVGSDMQEVIGTAIAFNLL. Residues 161–164 lie on the Extracellular side of the membrane; that stretch reads SAGR. Residues 165-185 form a helical membrane-spanning segment; the sequence is IPLWGGVLITVVDTFFFLYLN. Topologically, residues 186 to 193 are cytoplasmic; sequence NYGLRKLE. The helical transmembrane segment at 194 to 214 threads the bilayer; it reads AFFAFLIAIMAFTFGYEYVVA. The Extracellular portion of the chain corresponds to 215–240; that stretch reads RPAQGALLRGLFLPSCSGCGQPELLQ. The chain crosses the membrane as a helical span at residues 241–261; the sequence is AVGIVGAIIMPHNIYLHSALV. Over 262 to 286 the chain is Cytoplasmic; it reads KSREVDRTRREDIREANMYFLIEST. The chain crosses the membrane as a helical span at residues 287 to 307; that stretch reads IALFVSFFINLFVMAVFGQAF. Topologically, residues 308-346 are extracellular; sequence YQQTNQAAFNICANSSLHDYAKIFPRNNLTVAVDFYQGG. 2 N-linked (GlcNAc...) asparagine glycosylation sites follow: Asn-321 and Asn-335. A helical membrane pass occupies residues 347-367; it reads VILGCLFGPAALYIWAVGLLA. Over 368 to 394 the chain is Cytoplasmic; sequence AGQSSTMTGTYAGQFVMEGFLKLRWSR. A helical transmembrane segment spans residues 395 to 415; sequence FARLLLTRSCAILPALLVAVF. At 416-432 the chain is on the extracellular side; it reads KELQDLSSLNDLLNVLQ. The helical transmembrane segment at 433 to 453 threads the bilayer; that stretch reads SLLLPFAVLPILTFTSMPALM. Residues 454–468 lie on the Cytoplasmic side of the membrane; that stretch reads QEFASGRVNKVITSS. Residues 469–489 traverse the membrane as a helical segment; it reads IMLLVCAINFYFLVSYLPSLP. At 490 to 492 the chain is on the extracellular side; the sequence is HPA. Residues 493-513 traverse the membrane as a helical segment; sequence YFGLVALLAVIYLGLTTYLVW. Topologically, residues 514-538 are cytoplasmic; it reads TCLIAHGATLLVHSSHQHFLYGLLE.

Belongs to the NRAMP family.

Its subcellular location is the late endosome membrane. It localises to the lysosome membrane. It catalyses the reaction Zn(2+)(in) + H(+)(out) = Zn(2+)(out) + H(+)(in). The enzyme catalyses Fe(2+)(in) + H(+)(out) = Fe(2+)(out) + H(+)(in). It carries out the reaction Mn(2+)(in) + H(+)(out) = Mn(2+)(out) + H(+)(in). Functionally, macrophage-specific antiporter that fluxes metal ions in either direction against a proton gradient. Localized to late endosomal lysosomal membranes, delivers bivalent cations from the cytosol into these acidic compartments where they may directly affect antimicrobial activity. Involved in iron metabolism and host natural resistance to infection with intracellular parasites. Pathogen resistance involves sequestration of Fe(2+) and Mn(2+), cofactors of both prokaryotic and eukaryotic catalases and superoxide dismutases, not only to protect the macrophage against its own generation of reactive oxygen species, but to deny the cations to the pathogen for synthesis of its protective enzymes. This is Natural resistance-associated macrophage protein 1 (SLC11A1) from Sus scrofa (Pig).